Reading from the N-terminus, the 506-residue chain is Protein CYCLOPS (506 aa).

Disordered stretches follow at residues 193–223 (TVNS…LDNP) and 385–434 (KENL…RSST). Residues 202-219 (TPSQTPTFVSPSSSSTSP) show a composition bias toward low complexity. A compositionally biased stretch (basic and acidic residues) spans 385–394 (KENLKDDRKK). The Nuclear localization signal signature appears at 415–418 (KKRR). The segment covering 422–432 (SRKMAEAKERS) has biased composition (basic and acidic residues). Positions 441 to 506 (IQVVLKRCET…IERIVSDTNT (66 aa)) form a coiled coil.

Belongs to the CYCLOPS family. Highly epressed in roots. Expressed at very low levels in leaves, stems and panicles.

The protein localises to the nucleus. Functionally, involved in arbuscular mycorrhizal (AM) symbiosis. Required for fungal infection in roots and arbuscule development during AM symbiosis. The sequence is that of Protein CYCLOPS from Oryza sativa subsp. japonica (Rice).